Consider the following 309-residue polypeptide: Malate dehydrogenase (309 aa).

NAD(+) contacts are provided by residues 8–13 (GAGLVG) and Asp33. 2 residues coordinate substrate: Arg82 and Arg88. Residues Asn95 and 118-120 (VSN) each bind NAD(+). Residues Asn120 and Arg151 each contribute to the substrate site. Residue His175 is the Proton acceptor of the active site.

This sequence belongs to the LDH/MDH superfamily. MDH type 3 family.

The enzyme catalyses (S)-malate + NAD(+) = oxaloacetate + NADH + H(+). In terms of biological role, catalyzes the reversible oxidation of malate to oxaloacetate. The protein is Malate dehydrogenase of Pseudomonas putida (strain ATCC 700007 / DSM 6899 / JCM 31910 / BCRC 17059 / LMG 24140 / F1).